Consider the following 165-residue polypeptide: MIMGIDPGTLVSGYAIILVEQRYKIRAHSYGAIRLSSKDSLTQRYKQLFQTLSGVLDNVTPDAVVLETQYVHKNPQSAIKLGMGRGVLVLAAALRDIPVFEYTPNVAKRAVVGKGNASKQQVQLMVSKILNIPDVLNSDCEDIADAFALAICHAHTSAYTCLGVR.

Catalysis depends on residues D6, E67, and D142. Residues D6, E67, and D142 each contribute to the Mg(2+) site.

Belongs to the RuvC family. In terms of assembly, homodimer which binds Holliday junction (HJ) DNA. The HJ becomes 2-fold symmetrical on binding to RuvC with unstacked arms; it has a different conformation from HJ DNA in complex with RuvA. In the full resolvosome a probable DNA-RuvA(4)-RuvB(12)-RuvC(2) complex forms which resolves the HJ. Mg(2+) is required as a cofactor.

It is found in the cytoplasm. The enzyme catalyses Endonucleolytic cleavage at a junction such as a reciprocal single-stranded crossover between two homologous DNA duplexes (Holliday junction).. Its function is as follows. The RuvA-RuvB-RuvC complex processes Holliday junction (HJ) DNA during genetic recombination and DNA repair. Endonuclease that resolves HJ intermediates. Cleaves cruciform DNA by making single-stranded nicks across the HJ at symmetrical positions within the homologous arms, yielding a 5'-phosphate and a 3'-hydroxyl group; requires a central core of homology in the junction. The consensus cleavage sequence is 5'-(A/T)TT(C/G)-3'. Cleavage occurs on the 3'-side of the TT dinucleotide at the point of strand exchange. HJ branch migration catalyzed by RuvA-RuvB allows RuvC to scan DNA until it finds its consensus sequence, where it cleaves and resolves the cruciform DNA. This Chlamydia abortus (strain DSM 27085 / S26/3) (Chlamydophila abortus) protein is Crossover junction endodeoxyribonuclease RuvC.